A 285-amino-acid chain; its full sequence is Hydroxyacylglutathione hydrolase, mitochondrial (285 aa).

A mitochondrion-targeting transit peptide spans 1–10 (MKFLLQQIRN). 7 residues coordinate Zn(2+): histidine 69, histidine 71, aspartate 73, histidine 74, histidine 131, aspartate 154, and histidine 198.

Requires Zn(2+) as cofactor.

It localises to the mitochondrion matrix. It catalyses the reaction an S-(2-hydroxyacyl)glutathione + H2O = a 2-hydroxy carboxylate + glutathione + H(+). The enzyme catalyses (R)-S-lactoylglutathione + H2O = (R)-lactate + glutathione + H(+). Its pathway is secondary metabolite metabolism; methylglyoxal degradation; (R)-lactate from methylglyoxal: step 2/2. With respect to regulation, inhibited by various thiol compounds such as glutathione and coenzyme A. Thiolesterase that catalyzes the hydrolysis of S-D-lactoylglutathione to form glutathione and D-lactic acid. Involved in the metabolism of methylglyoxal, a toxic compound for yeast proliferation, by converting methylglyoxal to lactate via S-D-lactoylglutathione by sequential enzyme reactions catalyzed by glyoxalase I and glyoxalase II. This Saccharomyces cerevisiae (strain ATCC 204508 / S288c) (Baker's yeast) protein is Hydroxyacylglutathione hydrolase, mitochondrial.